We begin with the raw amino-acid sequence, 282 residues long: N-acetylaspartate synthetase (282 aa).

Residues 103–125 (FLTVMCYVMTKSFTLTFCAPFIL) traverse the membrane as a helical segment. The region spanning 110–269 (VMTKSFTLTF…RSPLERLFFQ (160 aa)) is the N-acetyltransferase domain.

This sequence belongs to the NAT8 family.

The protein resides in the cytoplasm. The protein localises to the microsome membrane. It localises to the mitochondrion membrane. Its subcellular location is the endoplasmic reticulum membrane. It carries out the reaction L-aspartate + acetyl-CoA = N-acetyl-L-aspartate + CoA + H(+). In terms of biological role, catalyzes the synthesis of N-acetylaspartate acid (NAA) from L-aspartate and acetyl-CoA. This chain is N-acetylaspartate synthetase (nat8l), found in Danio rerio (Zebrafish).